Reading from the N-terminus, the 285-residue chain is Tyrosine recombinase XerA (285 aa).

Positions 7 to 84 (IVNSDILEEF…ALKSYFKFEG (78 aa)) constitute a Core-binding (CB) domain. The Tyr recombinase domain occupies 100-274 (SLPKSLTEDE…TTKHLREAIE (175 aa)). Active-site residues include Arg-135, Lys-160, His-226, Arg-229, and His-252. The O-(3'-phospho-DNA)-tyrosine intermediate role is filled by Tyr-261.

Belongs to the 'phage' integrase family. XerA subfamily.

It is found in the cytoplasm. Its function is as follows. Site-specific tyrosine recombinase, which acts by catalyzing the cutting and rejoining of the recombining DNA molecules. The polypeptide is Tyrosine recombinase XerA (Pyrococcus horikoshii (strain ATCC 700860 / DSM 12428 / JCM 9974 / NBRC 100139 / OT-3)).